Here is a 497-residue protein sequence, read N- to C-terminus: Gasdermin-E (497 aa).

Residues 1–56 form a membrane targeting domain region; the sequence is MFAKATRSFLREVDAEGDLIAVSNLNDSDKSQLLSLVTKKKRFWCWQRPKYQFLSV. The residue at position 45 (cysteine 45) is an S-(2-succinyl)cysteine. Lysine 120 participates in a covalent cross-link: Glycyl lysine isopeptide (Lys-Gly) (interchain with G-Cter in ubiquitin). 3 positions are modified to S-(2-succinyl)cysteine: cysteine 156, cysteine 168, and cysteine 180. A Glycyl lysine isopeptide (Lys-Gly) (interchain with G-Cter in ubiquitin) cross-link involves residue lysine 189. 5 positions are modified to S-(2-succinyl)cysteine: cysteine 235, cysteine 371, cysteine 409, cysteine 418, and cysteine 491.

This sequence belongs to the gasdermin family. As to quaternary structure, homooligomer; homooligomeric ring-shaped pore complex containing 27-28 subunits when inserted in the membrane. Post-translationally, cleavage at Asp-270 by CASP3 (mature and uncleaved precursor forms) or granzyme B (GZMB) relieves autoinhibition and is sufficient to initiate pyroptosis. In terms of processing, succination by the Krebs cycle intermediate fumarate, which leads to S-(2-succinyl)cysteine residues, inhibits processing by caspases, and ability to initiate pyroptosis. Succination modification is catalyzed by a non-enzymatic reaction caused by an accumulation of fumarate. Ubiquitinated on Lys-120 and Lys-189 via 'Lys-48'-linked polyubiquitin chains, leading to proteasomal degradation. Deubiquitinated by USP48, leading to increased stability. Post-translationally, palmitoylated.

It localises to the cell membrane. Its subcellular location is the cytoplasm. It is found in the cytosol. With respect to regulation, the full-length protein before cleavage is inactive: intramolecular interactions between N- and C-terminal domains mediate autoinhibition in the absence of activation signal. The intrinsic pyroptosis-inducing activity is carried by the released N-terminal moiety (Gasdermin-E, N-terminal) following cleavage by CASP3 or granzyme B (GZMB). Activated by NLRP1 in the absence of GSDMD expression: NLRP1 cleaves and activates CASP8, promoting downstream activation of CASP3 and subsequent activation of GSDME. In terms of biological role, precursor of a pore-forming protein that converts non-inflammatory apoptosis to pyroptosis. This form constitutes the precursor of the pore-forming protein: upon cleavage, the released N-terminal moiety (Gasdermin-E, N-terminal) binds to membranes and forms pores, triggering pyroptosis. Functionally, pore-forming protein produced by cleavage by CASP3 or granzyme B (GZMB), which converts non-inflammatory apoptosis to pyroptosis or promotes granzyme-mediated pyroptosis, respectively. After cleavage, moves to the plasma membrane, homooligomerizes within the membrane and forms pores of 10-15 nanometers (nm) of inner diameter, allowing the release of mature interleukins (IL1B and IL16) and triggering pyroptosis. Binds to inner leaflet lipids, bisphosphorylated phosphatidylinositols, such as phosphatidylinositol (4,5)-bisphosphate. Cleavage by CASP3 switches CASP3-mediated apoptosis induced by TNF or danger signals, such as chemotherapy drugs, to pyroptosis. Mediates secondary necrosis downstream of the mitochondrial apoptotic pathway and CASP3 activation as well as in response to viral agents. Exhibits bactericidal activity. Cleavage by GZMB promotes tumor suppressor activity by triggering robust anti-tumor immunity. Suppresses tumors by mediating granzyme-mediated pyroptosis in target cells of natural killer (NK) cells: cleavage by granzyme B (GZMB), delivered to target cells from NK-cells, triggers pyroptosis of tumor cells and tumor suppression. May play a role in the p53/TP53-regulated cellular response to DNA damage. The polypeptide is Gasdermin-E (Equus caballus (Horse)).